A 155-amino-acid polypeptide reads, in one-letter code: Deoxyuridine 5'-triphosphate nucleotidohydrolase (155 aa).

Substrate is bound by residues 74-76 (RSG), Asn-87, and 91-93 (LID).

The protein belongs to the dUTPase family. It depends on Mg(2+) as a cofactor.

It catalyses the reaction dUTP + H2O = dUMP + diphosphate + H(+). It functions in the pathway pyrimidine metabolism; dUMP biosynthesis; dUMP from dCTP (dUTP route): step 2/2. Functionally, this enzyme is involved in nucleotide metabolism: it produces dUMP, the immediate precursor of thymidine nucleotides and it decreases the intracellular concentration of dUTP so that uracil cannot be incorporated into DNA. In Xanthomonas oryzae pv. oryzae (strain PXO99A), this protein is Deoxyuridine 5'-triphosphate nucleotidohydrolase.